A 338-amino-acid polypeptide reads, in one-letter code: Ferrochelatase (338 aa).

Positions 207 and 293 each coordinate Fe cation.

The protein belongs to the ferrochelatase family.

The protein localises to the cytoplasm. It catalyses the reaction heme b + 2 H(+) = protoporphyrin IX + Fe(2+). It functions in the pathway porphyrin-containing compound metabolism; protoheme biosynthesis; protoheme from protoporphyrin-IX: step 1/1. Catalyzes the ferrous insertion into protoporphyrin IX. This Shewanella denitrificans (strain OS217 / ATCC BAA-1090 / DSM 15013) protein is Ferrochelatase.